We begin with the raw amino-acid sequence, 317 residues long: MQKEIYYTFDINNIKDKEFTKVFVDCPWEAIRNPTPIDESEHLQWLKDSNLFDCDQDAENFFKDKTYIMSSYINPLNPKDNIIWVIRMHDFIYIVDDFYFEKGLLGEEWVINMFDRDAPQDKIGKTFWNIIEGMEKTGNKKAVEQLLHDTKIWALSVFTYNKCNINSESSFEYYCKYRCLDVGMDFGLSTAKVFAEPLPKEVLESSTYKRIIFGYNQTHSLINDMVSFERERKESNRMANYVMVHAYKTNSVQESMYHCKQMVEGVFNEINVLCEQLKREFPDVSNLDFHLNLIKLVISGDNYVSNDTTYPRYNLNH.

Positions 96–101 (DDFYFE) match the DDxx(x)D/E motif motif. The NDxxSxxxD/E motif signature appears at 223 to 231 (NDMVSFERE).

The protein belongs to the terpene synthase family.

In terms of biological role, terpene synthase that converts its substrate farnesyl diphosphate (FPP) into the sesquiterpene CAS 137235-51-9 as a major product. Is also able to convert FPP into 9-epi-(E)-caryophyllene, alpha-neoclovene, beta-neoclovene, and 3 yet unidentified sesquiterpenes. The sequence is that of Terpene synthase 3 from Dictyostelium purpureum (Slime mold).